Consider the following 253-residue polypeptide: Purine nucleoside phosphorylase DR_1966 (253 aa).

3 residues coordinate Zn(2+): His72, Cys106, and His123.

Belongs to the purine nucleoside phosphorylase YfiH/LACC1 family. Homodimer. Requires Cu(2+) as cofactor. Zn(2+) is required as a cofactor.

It carries out the reaction adenosine + phosphate = alpha-D-ribose 1-phosphate + adenine. The enzyme catalyses S-methyl-5'-thioadenosine + phosphate = 5-(methylsulfanyl)-alpha-D-ribose 1-phosphate + adenine. The catalysed reaction is inosine + phosphate = alpha-D-ribose 1-phosphate + hypoxanthine. It catalyses the reaction adenosine + H2O + H(+) = inosine + NH4(+). Functionally, purine nucleoside enzyme that catalyzes the phosphorolysis of adenosine and inosine nucleosides, yielding D-ribose 1-phosphate and the respective free bases, adenine and hypoxanthine. Also catalyzes the phosphorolysis of S-methyl-5'-thioadenosine into adenine and S-methyl-5-thio-alpha-D-ribose 1-phosphate. Also has adenosine deaminase activity. This Deinococcus radiodurans (strain ATCC 13939 / DSM 20539 / JCM 16871 / CCUG 27074 / LMG 4051 / NBRC 15346 / NCIMB 9279 / VKM B-1422 / R1) protein is Purine nucleoside phosphorylase DR_1966.